Here is a 787-residue protein sequence, read N- to C-terminus: MNSGLTPSPSPAVAAAGPAGVPGSKLKFCRYYAKDRTCFYGDECQFLHDDQLGGIHGNGNSPLSLPGGGPAAVYPQPVTPVGSKKLDLAGLEAQRLAIPGLDGGAIPDTSLTDSYFSTSFIGLNGFGSPGEATYPRMQQRMTNSSSSPSLLNDSAKPYAAHDPLGSPASAMFNDFGGLTMSQRRKTPNPTASEFIPKGGSTSRLSNMSQSSMSAFSQALFSHPSMGGPTGAGLAPGMSLSAGSSPLHSPKITPHTSPAPRRRSHTPNPANYMVPTSASTPVTNSVSQPPSTGEIIQKATVGGTTYFYTDTTPAPLTGMVFPNYHIYPPTAPHIAYMQPKANAPSFFMADELRQELINRHLITMAQIDQADMPGVPAEVDSYHSLFPLEPLPPPNRIKTSNFGYITSCYKAVNSKDDLPYCLRRIHGFRLVNTKCMSLVDTWKKIQHSNIVTLREMFTTKAFGEHSLVFAYDFHAGSETMMSRHFNDPSADAYFTKRKWGQHDGPLPRQHAGLLPESLIWAYIVQLSSALRTIHTAGLACRVMDPTKILITGKTRLRVNCVGIFDVLTYDGSQNNPVALMPQYQQADLISLGKVVLALACNSLAGIQRENLQKAMELVTINYSSDLKNLILYLLTEQNRMRSVNDIMPMIGARFYTQLDAAQMRNDVIEEDLAKEVQNGRLFRLLAKLGTINERPEFQKDPAWSETGDRYLLKLFRDHLFHQVTEAGTPWIDLSHIVSCLNKLDAGVPEKISLISRDEKSVLVVTYSDLKRCFENTFQELVAAANGQL.

The tract at residues 1 to 20 (MNSGLTPSPSPAVAAAGPAG) is disordered. The segment covering 11–20 (PAVAAAGPAG) has biased composition (low complexity). The segment at 23–51 (GSKLKFCRYYAKDRTCFYGDECQFLHDDQ) adopts a C3H1-type zinc-finger fold. 3 disordered regions span residues 131-162 (EATYPRMQQRMTNSSSSPSLLNDSAKPYAAHD), 179-210 (TMSQRRKTPNPTASEFIPKGGSTSRLSNMSQS), and 226-291 (GGPT…PPST). Composition is skewed to low complexity over residues 143 to 154 (NSSSSPSLLNDS) and 200 to 210 (STSRLSNMSQS). The short motif at 185–200 (KTPNPTASEFIPKGGS) is the PABPC-interacting motif-2 (PAM-2) element. The span at 265-290 (TPNPANYMVPTSASTPVTNSVSQPPS) shows a compositional bias: polar residues. Positions 365-650 (QIDQADMPGV…SVNDIMPMIG (286 aa)) are pseudokinase domain. Residues arginine 422, 471 to 478 (DFHAGSET), and 545 to 546 (TK) contribute to the ATP site. The stretch at 651–689 (ARFYTQLDAAQMRNDVIEEDLAKEVQNGRLFRLLAKLGT) forms a coiled coil. Positions 690–787 (INERPEFQKD…ELVAAANGQL (98 aa)) are knob domain.

It belongs to the protein kinase superfamily. PAN3 family. In terms of assembly, homodimer. Forms a heterotrimer with a catalytic subunit pan2 to form the poly(A)-nuclease (PAN) deadenylation complex. Interacts (via PAM-2 motif) with poly(A)-binding protein pabpc1 (via PABC domain), conferring substrate specificity of the enzyme complex. Interacts with the GW182 family proteins tnrc6a, tnrc6b and tnrc6c.

Its subcellular location is the cytoplasm. The protein resides in the P-body. In terms of biological role, regulatory subunit of the poly(A)-nuclease (PAN) deadenylation complex, one of two cytoplasmic mRNA deadenylases involved in general and miRNA-mediated mRNA turnover. PAN specifically shortens poly(A) tails of RNA and the activity is stimulated by poly(A)-binding protein (PABP). PAN deadenylation is followed by rapid degradation of the shortened mRNA tails by the CCR4-NOT complex. Deadenylated mRNAs are then degraded by two alternative mechanisms, namely exosome-mediated 3'-5' exonucleolytic degradation, or deadenylation-dependent mRNA decaping and subsequent 5'-3' exonucleolytic degradation by XRN1. PAN3 acts as a positive regulator for PAN activity, recruiting the catalytic subunit PAN2 to mRNA via its interaction with RNA and PABP, and to miRNA targets via its interaction with GW182 family proteins. This is PAN2-PAN3 deadenylation complex subunit pan3 from Xenopus tropicalis (Western clawed frog).